Reading from the N-terminus, the 353-residue chain is 3-deoxy-D-manno-octulosonic acid transferase (353 aa).

Glu31 acts as the Proton acceptor in catalysis. Residues 211–212, 247–249, and 273–276 contribute to the CMP site; these read PR, FGI, and NLLE.

This sequence belongs to the glycosyltransferase group 1 family. Glycosyltransferase 30 subfamily. In terms of assembly, can form homodimer, homotrimer and homotetramer.

The protein localises to the cell inner membrane. The catalysed reaction is lipid IVA (E. coli) + CMP-3-deoxy-beta-D-manno-octulosonate = alpha-Kdo-(2-&gt;6)-lipid IVA (E. coli) + CMP + H(+). It participates in bacterial outer membrane biogenesis; LPS core biosynthesis. In terms of biological role, involved in lipopolysaccharide (LPS) biosynthesis. Catalyzes the transfer of a single 3-deoxy-D-manno-octulosonate (Kdo) residue from CMP-Kdo to lipid IV(A), the tetraacyldisaccharide-1,4'-bisphosphate precursor of lipid A. Is strictly monofunctional, i.e. is capable of adding only a single Kdo residue to the acceptor lipid. This Aquifex aeolicus (strain VF5) protein is 3-deoxy-D-manno-octulosonic acid transferase (kdtA).